The chain runs to 306 residues: Serine/threonine-protein phosphatase 2A catalytic subunit A (306 aa).

Mn(2+) is bound by residues aspartate 54, histidine 56, aspartate 82, and asparagine 114. The active-site Proton donor is the histidine 115. Residues histidine 164 and histidine 238 each contribute to the Mn(2+) site. Leucine 306 carries the leucine methyl ester modification.

It belongs to the PPP phosphatase family. PP-2A subfamily. PP2A consists of a trimeric holoenzyme, composed of a 37 kDa catalytic subunit (C subunit) and a 65 kDa constant regulatory subunit (A subunit), that associates with a variety of regulatory subunits (B subunit) such as phr2AB (B55) and psrA (B56 homolog). The trimer may partially dissociates into a core 'AC' dimer equally active compared to the trimer. The cofactor is Mn(2+). Reversibly methyl esterified on Leu-306 by leucine carboxyl methyltransferase 1 (LCMT) and protein phosphatase methylesterase 1 (PPME1). Carboxyl methylation influences the affinity of the catalytic subunit for the different regulatory subunits, thereby modulating the PP2A holoenzyme's substrate specificity, enzyme activity and cellular localization.

Its subcellular location is the cytoplasm. It is found in the cytosol. The protein resides in the nucleus speckle. It catalyses the reaction O-phospho-L-seryl-[protein] + H2O = L-seryl-[protein] + phosphate. The catalysed reaction is O-phospho-L-threonyl-[protein] + H2O = L-threonyl-[protein] + phosphate. Functionally, plays a role in activating the myosin contractile function. Dephosphorylates threonine at 'Thr-1823', 'Thr-1833' and 'Thr-2029' in the C-terminal tail region of myosin II heavy chain (mhcA). Drives the assembly of dephosphorylated myosin II filaments to allow myosin recruitment into the cytoskeleton. The protein is Serine/threonine-protein phosphatase 2A catalytic subunit A (pho2a) of Dictyostelium discoideum (Social amoeba).